The primary structure comprises 747 residues: Elongation factor G, mitochondrial (747 aa).

A mitochondrion-targeting transit peptide spans 1-32 (MTLITRVLNGNLPLRLSTLKAARQLQCGYSSH). A tr-type G domain is found at 42 to 319 (ERIRNIGISA…AVVDYLPNPG (278 aa)). GTP-binding positions include 51 to 58 (AHIDSGKT), 118 to 122 (DTPGH), and 172 to 175 (NKLD).

It belongs to the TRAFAC class translation factor GTPase superfamily. Classic translation factor GTPase family. EF-G/EF-2 subfamily.

It is found in the mitochondrion. It participates in protein biosynthesis; polypeptide chain elongation. Functionally, mitochondrial GTPase that catalyzes the GTP-dependent ribosomal translocation step during translation elongation. During this step, the ribosome changes from the pre-translocational (PRE) to the post-translocational (POST) state as the newly formed A-site-bound peptidyl-tRNA and P-site-bound deacylated tRNA move to the P and E sites, respectively. Catalyzes the coordinated movement of the two tRNA molecules, the mRNA and conformational changes in the ribosome. Essential during development as it acts as a retrograde signal from mitochondria to the nucleus to slow down cell proliferation if mitochondrial energy output is low. In Drosophila mojavensis (Fruit fly), this protein is Elongation factor G, mitochondrial.